We begin with the raw amino-acid sequence, 194 residues long: MEPFVVHKGKVAGLDRANIDTDQIIPKQFLKRIERTGFGQFLFYDWRYLSDGTPNPHFELNRPENEGATILVANENFGCGSSREHAPWALADYGFRAIIAPSFADIFYNNCLKNSLLPIKLPKEDVAYLLKQAERADYELTISLEQQVVFDDEGFTSSFDIDPYRKQLLLKGWDEIDLTFVYEPYIIAYEKKRS.

The protein belongs to the LeuD family. LeuD type 1 subfamily. As to quaternary structure, heterodimer of LeuC and LeuD.

It carries out the reaction (2R,3S)-3-isopropylmalate = (2S)-2-isopropylmalate. It functions in the pathway amino-acid biosynthesis; L-leucine biosynthesis; L-leucine from 3-methyl-2-oxobutanoate: step 2/4. Its function is as follows. Catalyzes the isomerization between 2-isopropylmalate and 3-isopropylmalate, via the formation of 2-isopropylmaleate. This Anoxybacillus flavithermus (strain DSM 21510 / WK1) protein is 3-isopropylmalate dehydratase small subunit.